Consider the following 232-residue polypeptide: Enterobactin synthase component D (232 aa).

Mg(2+) contacts are provided by Asp-106, Glu-108, and Glu-150.

It belongs to the P-Pant transferase superfamily. EntD family. In terms of assembly, entB, EntD, EntE, and EntF form a multienzyme complex called enterobactin synthase. Mg(2+) serves as cofactor.

The protein localises to the membrane. It carries out the reaction apo-[aryl-carrier protein] + CoA = holo-[aryl-carrier protein] + adenosine 3',5'-bisphosphate + H(+). The enzyme catalyses apo-[peptidyl-carrier protein] + CoA = holo-[peptidyl-carrier protein] + adenosine 3',5'-bisphosphate + H(+). Its pathway is siderophore biosynthesis; enterobactin biosynthesis. Functionally, involved in the biosynthesis of the siderophore enterobactin (enterochelin), which is a macrocyclic trimeric lactone of N-(2,3-dihydroxybenzoyl)-serine. The serine trilactone serves as a scaffolding for the three catechol functionalities that provide hexadentate coordination for the tightly ligated iron(2+) atoms. Plays an essential role in the assembly of the enterobactin by catalyzing the transfer of the 4'-phosphopantetheine (Ppant) moiety from coenzyme A to the apo-domains of both EntB (ArCP domain) and EntF (PCP domain) to yield their holo-forms which make them competent for the activation of 2,3-dihydroxybenzoate (DHB) and L-serine, respectively. The sequence is that of Enterobactin synthase component D from Salmonella austin.